Reading from the N-terminus, the 760-residue chain is Catecholate siderophore receptor Fiu (760 aa).

The signal sequence occupies residues 1-31 (MENNRNFPARQFHSLTFFAGLCIGITPVAQA). In terms of domain architecture, TBDR plug spans 67 to 175 (PVADTTRTMT…PTGSINMISK (109 aa)). Positions 180 to 760 (DSGIDASASI…TFLLTANMHF (581 aa)) constitute a TBDR beta-barrel domain. The short motif at 743–760 (RYHPGEPRTFLLTANMHF) is the TonB C-terminal box element.

This sequence belongs to the TonB-dependent receptor family.

Its subcellular location is the cell outer membrane. Involved in the active transport across the outer membrane of iron complexed with catecholate siderophores such as dihydroxybenzoylserine and dihydroxybenzoate. It derives its energy for transport by interacting with the trans-periplasmic membrane protein TonB. Can also transport catechol-substituted cephalosporins. Receptor for microcins M, H47 and E492. The protein is Catecholate siderophore receptor Fiu (fiu) of Escherichia coli O6:H1 (strain CFT073 / ATCC 700928 / UPEC).